The sequence spans 188 residues: Elongation factor P (188 aa).

It belongs to the elongation factor P family.

The protein localises to the cytoplasm. It functions in the pathway protein biosynthesis; polypeptide chain elongation. Functionally, involved in peptide bond synthesis. Stimulates efficient translation and peptide-bond synthesis on native or reconstituted 70S ribosomes in vitro. Probably functions indirectly by altering the affinity of the ribosome for aminoacyl-tRNA, thus increasing their reactivity as acceptors for peptidyl transferase. The sequence is that of Elongation factor P from Sulfurimonas denitrificans (strain ATCC 33889 / DSM 1251) (Thiomicrospira denitrificans (strain ATCC 33889 / DSM 1251)).